The following is a 76-amino-acid chain: UPF0235 protein MRA_1997 (76 aa).

The protein belongs to the UPF0235 family.

The sequence is that of UPF0235 protein MRA_1997 from Mycobacterium tuberculosis (strain ATCC 25177 / H37Ra).